The chain runs to 433 residues: Serine hydroxymethyltransferase (433 aa).

(6S)-5,6,7,8-tetrahydrofolate-binding positions include leucine 132 and 136–138 (GHL). N6-(pyridoxal phosphate)lysine is present on lysine 241.

This sequence belongs to the SHMT family. Homodimer. It depends on pyridoxal 5'-phosphate as a cofactor.

The protein localises to the cytoplasm. The enzyme catalyses (6R)-5,10-methylene-5,6,7,8-tetrahydrofolate + glycine + H2O = (6S)-5,6,7,8-tetrahydrofolate + L-serine. It participates in one-carbon metabolism; tetrahydrofolate interconversion. Its pathway is amino-acid biosynthesis; glycine biosynthesis; glycine from L-serine: step 1/1. Its function is as follows. Catalyzes the reversible interconversion of serine and glycine with tetrahydrofolate (THF) serving as the one-carbon carrier. This reaction serves as the major source of one-carbon groups required for the biosynthesis of purines, thymidylate, methionine, and other important biomolecules. Also exhibits THF-independent aldolase activity toward beta-hydroxyamino acids, producing glycine and aldehydes, via a retro-aldol mechanism. In Rhodopseudomonas palustris (strain BisA53), this protein is Serine hydroxymethyltransferase.